The following is a 121-amino-acid chain: Small ribosomal subunit protein bS6 (121 aa).

Belongs to the bacterial ribosomal protein bS6 family.

Functionally, binds together with bS18 to 16S ribosomal RNA. The protein is Small ribosomal subunit protein bS6 (rpsF) of Rickettsia prowazekii (strain Madrid E).